Here is a 488-residue protein sequence, read N- to C-terminus: Aspartyl/glutamyl-tRNA(Asn/Gln) amidotransferase subunit B (488 aa).

Belongs to the GatB/GatE family. GatB subfamily. As to quaternary structure, heterotrimer of A, B and C subunits.

It carries out the reaction L-glutamyl-tRNA(Gln) + L-glutamine + ATP + H2O = L-glutaminyl-tRNA(Gln) + L-glutamate + ADP + phosphate + H(+). The enzyme catalyses L-aspartyl-tRNA(Asn) + L-glutamine + ATP + H2O = L-asparaginyl-tRNA(Asn) + L-glutamate + ADP + phosphate + 2 H(+). Functionally, allows the formation of correctly charged Asn-tRNA(Asn) or Gln-tRNA(Gln) through the transamidation of misacylated Asp-tRNA(Asn) or Glu-tRNA(Gln) in organisms which lack either or both of asparaginyl-tRNA or glutaminyl-tRNA synthetases. The reaction takes place in the presence of glutamine and ATP through an activated phospho-Asp-tRNA(Asn) or phospho-Glu-tRNA(Gln). The protein is Aspartyl/glutamyl-tRNA(Asn/Gln) amidotransferase subunit B of Chlamydia trachomatis serovar A (strain ATCC VR-571B / DSM 19440 / HAR-13).